A 274-amino-acid chain; its full sequence is MSENTSTATQPTPLLQDTFTVGSRTFSSRLLVGTGKYKDMTETGAAIGASAAEIVTVAIRRTNIGQNSNEPNLLDVISPDKYTILPNTAGCFDAETAIRTCKLARELLGGHNLVKLEVLGDEKTLYPNVMETLKAAKVLIDDGFEVMVYTSDDPIVAQELESMGCVAIMPLGSLIGSGLGLINRHTLSLIIENTKVPVLVDAGVGTASDAAIAMELGCDGVLMNSAIANAKNPVMMAQAMKHAVWAGRQAFLAGRMPMRKMATASSPQTGYFFQ.

The active-site Schiff-base intermediate with DXP is Lys115. Residues Gly176, Ala202 to Gly203, and Asn224 to Ser225 each bind 1-deoxy-D-xylulose 5-phosphate.

The protein belongs to the ThiG family. Homotetramer. Forms heterodimers with either ThiH or ThiS.

The protein resides in the cytoplasm. It carries out the reaction [ThiS sulfur-carrier protein]-C-terminal-Gly-aminoethanethioate + 2-iminoacetate + 1-deoxy-D-xylulose 5-phosphate = [ThiS sulfur-carrier protein]-C-terminal Gly-Gly + 2-[(2R,5Z)-2-carboxy-4-methylthiazol-5(2H)-ylidene]ethyl phosphate + 2 H2O + H(+). Its pathway is cofactor biosynthesis; thiamine diphosphate biosynthesis. Functionally, catalyzes the rearrangement of 1-deoxy-D-xylulose 5-phosphate (DXP) to produce the thiazole phosphate moiety of thiamine. Sulfur is provided by the thiocarboxylate moiety of the carrier protein ThiS. In vitro, sulfur can be provided by H(2)S. In Psychrobacter arcticus (strain DSM 17307 / VKM B-2377 / 273-4), this protein is Thiazole synthase.